The chain runs to 492 residues: N-succinylglutamate 5-semialdehyde dehydrogenase (492 aa).

220–225 is an NAD(+) binding site; it reads GSANTG. Catalysis depends on residues Glu-243 and Cys-277.

The protein belongs to the aldehyde dehydrogenase family. AstD subfamily.

The catalysed reaction is N-succinyl-L-glutamate 5-semialdehyde + NAD(+) + H2O = N-succinyl-L-glutamate + NADH + 2 H(+). Its pathway is amino-acid degradation; L-arginine degradation via AST pathway; L-glutamate and succinate from L-arginine: step 4/5. Functionally, catalyzes the NAD-dependent reduction of succinylglutamate semialdehyde into succinylglutamate. The sequence is that of N-succinylglutamate 5-semialdehyde dehydrogenase from Shigella flexneri serotype 5b (strain 8401).